Consider the following 232-residue polypeptide: U2 small nuclear ribonucleoprotein B'' (232 aa).

The RRM 1 domain maps to 10–89; the sequence is QTVYLRNLNE…KRMRVQYAKT (80 aa). Positions 90-159 are disordered; it reads RSDCLATEDG…QEPPAPPNNI (70 aa). The span at 108–123 shows a compositional bias: basic and acidic residues; sequence KKQEEKAAEKKRRAEE. Residues 127-151 are compositionally biased toward polar residues; sequence SGPNAAAQSNGTGYQASRLGKTSQE. An RRM 2 domain is found at 158-232; that stretch reads NILFIQNLPA…NPMAISYAKK (75 aa).

It belongs to the RRM U1 A/B'' family. As to quaternary structure, component of the spliceosome where it is associated with snRNP U2.

It is found in the nucleus. Its subcellular location is the cajal body. It localises to the nucleoplasm. The protein localises to the cytoplasm. In terms of biological role, involved in nuclear pre-mRNA splicing. The polypeptide is U2 small nuclear ribonucleoprotein B'' (Oryza sativa subsp. japonica (Rice)).